Consider the following 241-residue polypeptide: Oil body-associated protein 1B (241 aa).

Residues 1–12 (MEKAVHSSTTSG) show a composition bias toward polar residues. Residues 1 to 22 (MEKAVHSSTTSGPAVPGETTKT) form a disordered region.

Belongs to the OBAP family.

This Arabidopsis thaliana (Mouse-ear cress) protein is Oil body-associated protein 1B.